A 438-amino-acid polypeptide reads, in one-letter code: Methyl-coenzyme M reductase subunit beta (438 aa).

Tyr-367 is a binding site for coenzyme M. Gly-369 contributes to the coenzyme B binding site.

Belongs to the methyl-coenzyme M reductase beta subunit family. MCR is a hexamer of two alpha, two beta, and two gamma chains, forming a dimer of heterotrimers. It depends on coenzyme F430 as a cofactor.

The protein localises to the cytoplasm. The catalysed reaction is coenzyme B + methyl-coenzyme M = methane + coenzyme M-coenzyme B heterodisulfide. It functions in the pathway one-carbon metabolism; methyl-coenzyme M reduction; methane from methyl-coenzyme M: step 1/1. Component of the methyl-coenzyme M reductase (MCR) I that catalyzes the reductive cleavage of methyl-coenzyme M (CoM-S-CH3 or 2-(methylthio)ethanesulfonate) using coenzyme B (CoB or 7-mercaptoheptanoylthreonine phosphate) as reductant which results in the production of methane and the mixed heterodisulfide of CoB and CoM (CoM-S-S-CoB). This is the final step in methanogenesis. This chain is Methyl-coenzyme M reductase subunit beta (mcrB), found in Methanothermus fervidus.